The sequence spans 146 residues: NADH-ubiquinone oxidoreductase chain 6 (146 aa).

The next 4 membrane-spanning stretches (helical) occupy residues Leu-10 to Val-30, Phe-41 to Leu-61, Gly-75 to Thr-95, and Ala-124 to Ile-144.

Belongs to the complex I subunit 6 family.

Its subcellular location is the mitochondrion membrane. The catalysed reaction is a ubiquinone + NADH + 5 H(+)(in) = a ubiquinol + NAD(+) + 4 H(+)(out). Its function is as follows. Core subunit of the mitochondrial membrane respiratory chain NADH dehydrogenase (Complex I) that is believed to belong to the minimal assembly required for catalysis. Complex I functions in the transfer of electrons from NADH to the respiratory chain. The immediate electron acceptor for the enzyme is believed to be ubiquinone. This chain is NADH-ubiquinone oxidoreductase chain 6 (ND6), found in Debaryomyces hansenii (strain ATCC 36239 / CBS 767 / BCRC 21394 / JCM 1990 / NBRC 0083 / IGC 2968) (Yeast).